Consider the following 290-residue polypeptide: Acetyl-coenzyme A carboxylase carboxyl transferase subunit beta (290 aa).

The 263-residue stretch at 28 to 290 folds into the CoA carboxyltransferase N-terminal domain; sequence IMTKCPKCKK…SRGGDEWHTN (263 aa). Residues cysteine 32, cysteine 35, cysteine 51, and cysteine 54 each contribute to the Zn(2+) site. Residues 32-54 form a C4-type zinc finger; sequence CPKCKKIMYTKELVKNLRVCISC.

The protein belongs to the AccD/PCCB family. Acetyl-CoA carboxylase is a heterohexamer composed of biotin carboxyl carrier protein (AccB), biotin carboxylase (AccC) and two subunits each of ACCase subunit alpha (AccA) and ACCase subunit beta (AccD). The cofactor is Zn(2+).

The protein resides in the cytoplasm. The enzyme catalyses N(6)-carboxybiotinyl-L-lysyl-[protein] + acetyl-CoA = N(6)-biotinyl-L-lysyl-[protein] + malonyl-CoA. It participates in lipid metabolism; malonyl-CoA biosynthesis; malonyl-CoA from acetyl-CoA: step 1/1. In terms of biological role, component of the acetyl coenzyme A carboxylase (ACC) complex. Biotin carboxylase (BC) catalyzes the carboxylation of biotin on its carrier protein (BCCP) and then the CO(2) group is transferred by the transcarboxylase to acetyl-CoA to form malonyl-CoA. The polypeptide is Acetyl-coenzyme A carboxylase carboxyl transferase subunit beta (Anoxybacillus flavithermus (strain DSM 21510 / WK1)).